Consider the following 256-residue polypeptide: Hydroxyacylglutathione hydrolase (256 aa).

The Zn(2+) site is built by H55, H57, D59, H60, H113, D132, and H170.

Belongs to the metallo-beta-lactamase superfamily. Glyoxalase II family. Monomer. The cofactor is Zn(2+).

The catalysed reaction is an S-(2-hydroxyacyl)glutathione + H2O = a 2-hydroxy carboxylate + glutathione + H(+). The protein operates within secondary metabolite metabolism; methylglyoxal degradation; (R)-lactate from methylglyoxal: step 2/2. Thiolesterase that catalyzes the hydrolysis of S-D-lactoyl-glutathione to form glutathione and D-lactic acid. The chain is Hydroxyacylglutathione hydrolase from Methylococcus capsulatus (strain ATCC 33009 / NCIMB 11132 / Bath).